The primary structure comprises 214 residues: Superoxide dismutase [Mn] (214 aa).

Residues His-27, His-82, Asp-169, and His-173 each contribute to the Mn(2+) site.

It belongs to the iron/manganese superoxide dismutase family. In terms of assembly, homodimer. It depends on Mn(2+) as a cofactor.

It catalyses the reaction 2 superoxide + 2 H(+) = H2O2 + O2. Functionally, destroys superoxide anion radicals which are normally produced within the cells and which are toxic to biological systems. This chain is Superoxide dismutase [Mn] (sodA), found in Pasteurella multocida (strain Pm70).